The sequence spans 356 residues: Protein disulfide isomerase crld-1 (356 aa).

Positions 1 to 17 are cleaved as a signal peptide; sequence MSRILLLLAVLIGATSQ. At 18 to 299 the chain is on the lumenal side; it reads KEVTIKNEKC…DRPFMPIDQQ (282 aa). The short motif at 27-30 is the CXXC element; sequence CRTC. Cysteine 27 and cysteine 30 are oxidised to a cystine. N-linked (GlcNAc...) asparagine glycosylation occurs at asparagine 122. The EGF-like 1 domain maps to 150-188; that stretch reads GLSEKADVCFGKGSCHGDGSREGSGKCKCETGYTGNLCR. 5 cysteine pairs are disulfide-bonded: cysteine 158/cysteine 176, cysteine 178/cysteine 187, cysteine 245/cysteine 258, cysteine 251/cysteine 267, and cysteine 269/cysteine 281. The region spanning 241-282 is the EGF-like 2; calcium-binding domain; the sequence is DVNECQNESACTKEHEICVNTVGSFKCECKEGYKKDDEQNCQ. Residue asparagine 247 is glycosylated (N-linked (GlcNAc...) asparagine). The chain crosses the membrane as a helical span at residues 300 to 317; the sequence is LKLIAFSSLIIIITFVVW. The Cytoplasmic portion of the chain corresponds to 318 to 321; the sequence is HGSP. The helical transmembrane segment at 322–341 threads the bilayer; sequence VLYVLTGITIVALILVDLYV. The Lumenal segment spans residues 342–356; sequence NPDTIPDEAKRFLGY.

This sequence belongs to the CRELD family. In terms of assembly, interacts with unc-29. In terms of tissue distribution, isoforms a: Widely expressed in tissues including body wall muscles, neurons, pharynx, hypodermis, seam cells, intestine and gonad. Isoform b: Widely expressed in tissues including body wall muscles, neurons, pharynx, hypodermis, seam cells, intestine and gonad.

It localises to the endoplasmic reticulum membrane. The protein localises to the endoplasmic reticulum lumen. The enzyme catalyses Catalyzes the rearrangement of -S-S- bonds in proteins.. Its function is as follows. Protein disulfide isomerase which associates with the unc-29 subunit of levamisole-sensitive nicotinic acetylcholine receptors (L-nAChR) to promote L-nAChR assembly in the endoplasmic reticulum at neuromuscular junctions. Functionally, promotes L-nAChR assembly in the endoplasmic reticulum at neuromuscular junctions. This is Protein disulfide isomerase crld-1 from Caenorhabditis elegans.